A 396-amino-acid chain; its full sequence is Elongation factor Tu (396 aa).

The region spanning 10–206 is the tr-type G domain; that stretch reads KPHCNIGTIG…AVDAYIPQPE (197 aa). Residues 19–26 are G1; that stretch reads GHVDHGKT. Residue 19 to 26 participates in GTP binding; the sequence is GHVDHGKT. Position 26 (Thr26) interacts with Mg(2+). The tract at residues 60-64 is G2; the sequence is GITIS. Positions 81 to 84 are G3; the sequence is DCPG. Residues 81–85 and 136–139 contribute to the GTP site; these read DCPGH and NKCD. A G4 region spans residues 136 to 139; it reads NKCD. Positions 174–176 are G5; sequence SAL.

This sequence belongs to the TRAFAC class translation factor GTPase superfamily. Classic translation factor GTPase family. EF-Tu/EF-1A subfamily. In terms of assembly, monomer.

The protein resides in the cytoplasm. It catalyses the reaction GTP + H2O = GDP + phosphate + H(+). Functionally, GTP hydrolase that promotes the GTP-dependent binding of aminoacyl-tRNA to the A-site of ribosomes during protein biosynthesis. The polypeptide is Elongation factor Tu (Nitrobacter winogradskyi (strain ATCC 25391 / DSM 10237 / CIP 104748 / NCIMB 11846 / Nb-255)).